Consider the following 196-residue polypeptide: UMP-CMP kinase (196 aa).

13 to 18 (GAGKGT) provides a ligand contact to ATP. The interval 33–63 (SAGDLLRDERKRPGSQYGELIENYIKEGEIV) is NMP. Residues arginine 39, 61–63 (EIV), and 93–96 (GFPR) each bind a ribonucleoside 5'-phosphate. Asparagine 100 contacts CMP. Residues 133 to 143 (ERGKSSGRSDD) are LID. Arginine 134 contacts ATP. A ribonucleoside 5'-phosphate-binding residues include arginine 140 and arginine 151. Lysine 179 lines the ATP pocket.

The protein belongs to the adenylate kinase family. UMP-CMP kinase subfamily. As to quaternary structure, monomer. Requires Mg(2+) as cofactor.

Its subcellular location is the nucleus. It is found in the cytoplasm. The catalysed reaction is CMP + ATP = CDP + ADP. It carries out the reaction dCMP + ATP = dCDP + ADP. The enzyme catalyses UMP + ATP = UDP + ADP. It catalyses the reaction a 2'-deoxyribonucleoside 5'-diphosphate + ATP = a 2'-deoxyribonucleoside 5'-triphosphate + ADP. The catalysed reaction is a ribonucleoside 5'-diphosphate + ATP = a ribonucleoside 5'-triphosphate + ADP. Catalyzes the phosphorylation of pyrimidine nucleoside monophosphates at the expense of ATP. Plays an important role in de novo pyrimidine nucleotide biosynthesis. Has preference for UMP and CMP as phosphate acceptors. Also displays broad nucleoside diphosphate kinase activity. The sequence is that of UMP-CMP kinase (CMPK) from Gallus gallus (Chicken).